Reading from the N-terminus, the 1578-residue chain is Mediator of RNA polymerase II transcription subunit 14 (1578 aa).

The LXXLL motif 1 motif lies at 49 to 53 (LAELL). A disordered region spans residues 561-582 (SQSVTAGGTSQSSAPSAATTES). Low complexity predominate over residues 565–580 (TAGGTSQSSAPSAATT). The short motif at 739-743 (LKRLL) is the LXXLL motif 2 element. 2 disordered regions span residues 1009–1173 (RRRS…PDHK) and 1510–1578 (APGG…GGPN). A compositionally biased stretch (polar residues) spans 1084 to 1093 (SQSHPNFNMT). 2 stretches are compositionally biased toward pro residues: residues 1095-1104 (PPAPHMPHPS) and 1157-1167 (PGMPRPSPRPG). 2 stretches are compositionally biased toward gly residues: residues 1510 to 1521 (APGGPGGPGPMG) and 1547 to 1578 (MGGGGQQSNYGGMVGGGAQSGVPGGPGAGGPN).

The protein belongs to the Mediator complex subunit 14 family. As to quaternary structure, component of the Mediator complex.

The protein localises to the nucleus. Functionally, component of the Mediator complex, a coactivator involved in the regulated transcription of nearly all RNA polymerase II-dependent genes. Mediator functions as a bridge to convey information from gene-specific regulatory proteins to the basal RNA polymerase II transcription machinery. Mediator is recruited to promoters by direct interactions with regulatory proteins and serves as a scaffold for the assembly of a functional preinitiation complex with RNA polymerase II and the general transcription factors. The protein is Mediator of RNA polymerase II transcription subunit 14 (MED14) of Aedes aegypti (Yellowfever mosquito).